Consider the following 155-residue polypeptide: NADH-ubiquinone oxidoreductase chain 6 (155 aa).

Helical transmembrane passes span 1-21 (MLGSIVVISMFMLLMNHPLAF), 42-62 (WISLILFLIFLGGILVMFIYV), 71-91 (FAVDLTSFMWVVPTIVLSFLV), and 121-141 (LTMLAYSFMVVYLFLALLLVI).

The protein belongs to the complex I subunit 6 family.

It is found in the mitochondrion membrane. It carries out the reaction a ubiquinone + NADH + 5 H(+)(in) = a ubiquinol + NAD(+) + 4 H(+)(out). Functionally, core subunit of the mitochondrial membrane respiratory chain NADH dehydrogenase (Complex I) that is believed to belong to the minimal assembly required for catalysis. Complex I functions in the transfer of electrons from NADH to the respiratory chain. The immediate electron acceptor for the enzyme is believed to be ubiquinone. The protein is NADH-ubiquinone oxidoreductase chain 6 (ND6) of Artemia franciscana (Brine shrimp).